A 250-amino-acid polypeptide reads, in one-letter code: Ubiquinone/menaquinone biosynthesis C-methyltransferase UbiE (250 aa).

S-adenosyl-L-methionine is bound by residues Thr74, Asp94, 122–123, and Ser139; that span reads DA.

Belongs to the class I-like SAM-binding methyltransferase superfamily. MenG/UbiE family.

The enzyme catalyses a 2-demethylmenaquinol + S-adenosyl-L-methionine = a menaquinol + S-adenosyl-L-homocysteine + H(+). It carries out the reaction a 2-methoxy-6-(all-trans-polyprenyl)benzene-1,4-diol + S-adenosyl-L-methionine = a 5-methoxy-2-methyl-3-(all-trans-polyprenyl)benzene-1,4-diol + S-adenosyl-L-homocysteine + H(+). It participates in quinol/quinone metabolism; menaquinone biosynthesis; menaquinol from 1,4-dihydroxy-2-naphthoate: step 2/2. The protein operates within cofactor biosynthesis; ubiquinone biosynthesis. In terms of biological role, methyltransferase required for the conversion of demethylmenaquinol (DMKH2) to menaquinol (MKH2) and the conversion of 2-polyprenyl-6-methoxy-1,4-benzoquinol (DDMQH2) to 2-polyprenyl-3-methyl-6-methoxy-1,4-benzoquinol (DMQH2). The sequence is that of Ubiquinone/menaquinone biosynthesis C-methyltransferase UbiE from Roseobacter denitrificans (strain ATCC 33942 / OCh 114) (Erythrobacter sp. (strain OCh 114)).